The primary structure comprises 804 residues: Probable phosphoketolase (804 aa).

This sequence belongs to the XFP family. Thiamine diphosphate serves as cofactor.

The sequence is that of Probable phosphoketolase from Mycobacterium avium (strain 104).